The following is a 150-amino-acid chain: Small ribosomal subunit protein uS13 (150 aa).

The protein belongs to the universal ribosomal protein uS13 family. As to quaternary structure, part of the 30S ribosomal subunit. Forms a loose heterodimer with protein S19. Forms two bridges to the 50S subunit in the 70S ribosome.

Functionally, located at the top of the head of the 30S subunit, it contacts several helices of the 16S rRNA. In the 70S ribosome it contacts the 23S rRNA (bridge B1a) and protein L5 of the 50S subunit (bridge B1b), connecting the 2 subunits; these bridges are implicated in subunit movement. The protein is Small ribosomal subunit protein uS13 of Aeropyrum pernix (strain ATCC 700893 / DSM 11879 / JCM 9820 / NBRC 100138 / K1).